Reading from the N-terminus, the 426-residue chain is Mannose-6-phosphate isomerase (426 aa).

Residues Gln112, His114, Glu139, and His277 each coordinate Zn(2+). Arg296 is an active-site residue.

This sequence belongs to the mannose-6-phosphate isomerase type 1 family. Zn(2+) is required as a cofactor.

Its subcellular location is the cytoplasm. It carries out the reaction D-mannose 6-phosphate = D-fructose 6-phosphate. Its pathway is nucleotide-sugar biosynthesis; GDP-alpha-D-mannose biosynthesis; alpha-D-mannose 1-phosphate from D-fructose 6-phosphate: step 1/2. Functionally, involved in the synthesis of the GDP-mannose and dolichol-phosphate-mannose required for a number of critical mannosyl transfer reactions. This chain is Mannose-6-phosphate isomerase (PMI40), found in Ogataea parapolymorpha (strain ATCC 26012 / BCRC 20466 / JCM 22074 / NRRL Y-7560 / DL-1) (Yeast).